The sequence spans 152 residues: Ribonuclease H (152 aa).

One can recognise an RNase H type-1 domain in the interval 1–142; it reads MDSKVVIYTD…ADKLAVQGRE (142 aa). Positions 10, 48, 70, and 134 each coordinate Mg(2+).

The protein belongs to the RNase H family. Monomer. Requires Mg(2+) as cofactor.

It is found in the cytoplasm. It catalyses the reaction Endonucleolytic cleavage to 5'-phosphomonoester.. Endonuclease that specifically degrades the RNA of RNA-DNA hybrids. The sequence is that of Ribonuclease H from Rickettsia felis (strain ATCC VR-1525 / URRWXCal2) (Rickettsia azadi).